A 371-amino-acid polypeptide reads, in one-letter code: Histidinol-phosphate aminotransferase (371 aa).

Lys-222 carries the N6-(pyridoxal phosphate)lysine modification.

This sequence belongs to the class-II pyridoxal-phosphate-dependent aminotransferase family. Histidinol-phosphate aminotransferase subfamily. In terms of assembly, homodimer. Pyridoxal 5'-phosphate is required as a cofactor.

It carries out the reaction L-histidinol phosphate + 2-oxoglutarate = 3-(imidazol-4-yl)-2-oxopropyl phosphate + L-glutamate. It participates in amino-acid biosynthesis; L-histidine biosynthesis; L-histidine from 5-phospho-alpha-D-ribose 1-diphosphate: step 7/9. This Anoxybacillus flavithermus (strain DSM 21510 / WK1) protein is Histidinol-phosphate aminotransferase.